Reading from the N-terminus, the 89-residue chain is MPAGSPENHVSAELLGILRDDLNVDVSRVTPDARLVDDVGLDSVAFAVGMVAIEERLGVTLTEEELLSCETVGDLQAAIAAEPRETRDE.

The Carrier domain occupies Asn-8–Pro-83. The residue at position 43 (Ser-43) is an O-(pantetheine 4'-phosphoryl)serine.

4'-phosphopantetheine is transferred from CoA to a specific serine of apo-ACP, leading to the activated holo-ACP form.

The protein resides in the cytoplasm. It functions in the pathway siderophore biosynthesis; mycobactin biosynthesis. In terms of biological role, acyl carrier protein involved in the formation of acyl-S-ACP intermediates within the mycobactin biosynthesis process. The sequence is that of Acyl carrier protein MbtL (mbtL) from Mycolicibacterium paratuberculosis (strain ATCC BAA-968 / K-10) (Mycobacterium paratuberculosis).